A 142-amino-acid chain; its full sequence is Sec-independent protein translocase protein TatB (142 aa).

Residues 2–22 (FANVGWGEMLVLVIAGLVILG) traverse the membrane as a helical segment. Residues 89-142 (DDSIFTGKFDQNGKSEKPEQKPEKPQSAPGPAAAVPDQPAGGRSGSTPYDTDAT) form a disordered region. Basic and acidic residues predominate over residues 99 to 112 (QNGKSEKPEQKPEK). Over residues 133-142 (GSTPYDTDAT) the composition is skewed to polar residues.

This sequence belongs to the TatB family. As to quaternary structure, the Tat system comprises two distinct complexes: a TatABC complex, containing multiple copies of TatA, TatB and TatC subunits, and a separate TatA complex, containing only TatA subunits. Substrates initially bind to the TatABC complex, which probably triggers association of the separate TatA complex to form the active translocon.

The protein resides in the cell membrane. Functionally, part of the twin-arginine translocation (Tat) system that transports large folded proteins containing a characteristic twin-arginine motif in their signal peptide across membranes. Together with TatC, TatB is part of a receptor directly interacting with Tat signal peptides. TatB may form an oligomeric binding site that transiently accommodates folded Tat precursor proteins before their translocation. The sequence is that of Sec-independent protein translocase protein TatB from Mycolicibacterium vanbaalenii (strain DSM 7251 / JCM 13017 / BCRC 16820 / KCTC 9966 / NRRL B-24157 / PYR-1) (Mycobacterium vanbaalenii).